We begin with the raw amino-acid sequence, 1335 residues long: Xanthine dehydrogenase/oxidase (1335 aa).

The 2Fe-2S ferredoxin-type domain maps to 7-94; sequence DELVFFVNGK…HVAVTTVEGI (88 aa). 8 residues coordinate [2Fe-2S] cluster: C46, C51, C54, C76, C115, C118, C150, and C152. The FAD-binding PCMH-type domain occupies 231 to 416; it reads FEGERVTWIQ…VSIVIPYSRK (186 aa). FAD is bound by residues 259–266, F339, 349–353, D362, L406, and K424; these read LVVGNTEI and SIGGN. C538 and C995 are joined by a disulfide. The Mo-molybdopterin site is built by Q770 and F801. E805 and R883 together coordinate substrate. R915 is a binding site for Mo-molybdopterin. F917 and T1013 together coordinate substrate. A1082 serves as a coordination point for Mo-molybdopterin. The Proton acceptor role is filled by E1264.

It belongs to the xanthine dehydrogenase family. As to quaternary structure, homodimer. Interacts with BTN1A1. FAD is required as a cofactor. The cofactor is Mo-molybdopterin. Requires [2Fe-2S] cluster as cofactor. Subject to partial proteolysis; this alters the enzyme from the dehydrogenase form (D) to the oxidase form (O). In terms of processing, contains sulfhydryl groups that are easily oxidized (in vitro); this alters the enzyme from the dehydrogenase form (D) to the oxidase form (O).

It is found in the cytoplasm. It localises to the peroxisome. The protein resides in the secreted. The enzyme catalyses xanthine + NAD(+) + H2O = urate + NADH + H(+). It carries out the reaction hypoxanthine + NAD(+) + H2O = xanthine + NADH + H(+). The catalysed reaction is xanthine + O2 + H2O = urate + H2O2. With respect to regulation, can be converted from the dehydrogenase form (D) to the oxidase form (O) irreversibly by proteolysis or reversibly through the oxidation of sulfhydryl groups. Functionally, key enzyme in purine degradation. Catalyzes the oxidation of hypoxanthine to xanthine. Catalyzes the oxidation of xanthine to uric acid. Contributes to the generation of reactive oxygen species. This chain is Xanthine dehydrogenase/oxidase (Xdh), found in Mus musculus (Mouse).